The primary structure comprises 213 residues: MVFRRFVEVGRVAYVSFGPHAGKLVAIVDVIDQNRALVDGPCTQVRRQAMPFKCMQLTDFILKFPHSARQKYVRKAWEKADINAKWAATRWAKKIEAREKKAKMTDFDRYKVMKARKMRNRLIKLEVKKLQKAALLKASPKKALAKGAAAAAAAAAAKVPVKKITTAGKKAPAQKAPAQKAAGQKAAPPPKAQKVQKPPAQKAPAPKASGEKA.

Lys79 is subject to N6-acetyllysine. An N6-acetyllysine; alternate modification is found at Lys85. The residue at position 85 (Lys85) is an N6-succinyllysine; alternate. Residue Lys124 forms a Glycyl lysine isopeptide (Lys-Gly) (interchain with G-Cter in SUMO2) linkage. Ser139 carries the phosphoserine modification. A disordered region spans residues 166 to 213 (TAGKKAPAQKAPAQKAAGQKAAPPPKAQKVQKPPAQKAPAPKASGEKA). Residues 169–173 (KKAPA) form a 1-1; approximate repeat. Positions 169 to 188 (KKAPAQKAPAQKAAGQKAAP) are 4 X 5 AA tandem repeats of Q-K-A-[APS]-X. 5 tandem repeats follow at residues 174–178 (QKAPA), 179–183 (QKAAG), 184–188 (QKAAP), 191–193 (KAQ), and 194–196 (KVQ). The tract at residues 191-196 (KAQKVQ) is 2 X 3 AA tandem repeats of K-G-Q. Lys202 is modified (N6-succinyllysine).

This sequence belongs to the eukaryotic ribosomal protein eL14 family. In terms of assembly, component of the large ribosomal subunit.

The protein resides in the cytoplasm. Component of the large ribosomal subunit. The ribosome is a large ribonucleoprotein complex responsible for the synthesis of proteins in the cell. This is Large ribosomal subunit protein eL14 (RPL14) from Sus scrofa (Pig).